The sequence spans 252 residues: Diphthine synthase (252 aa).

Residues leucine 9, aspartate 85, valine 88, 113 to 114, leucine 165, alanine 202, and histidine 227 contribute to the S-adenosyl-L-methionine site; that span reads SI.

This sequence belongs to the diphthine synthase family. In terms of assembly, homodimer.

The catalysed reaction is 2-[(3S)-amino-3-carboxypropyl]-L-histidyl-[translation elongation factor 2] + 3 S-adenosyl-L-methionine = diphthine-[translation elongation factor 2] + 3 S-adenosyl-L-homocysteine + 3 H(+). It functions in the pathway protein modification; peptidyl-diphthamide biosynthesis. Functionally, S-adenosyl-L-methionine-dependent methyltransferase that catalyzes the trimethylation of the amino group of the modified target histidine residue in translation elongation factor 2 (EF-2), to form an intermediate called diphthine. The three successive methylation reactions represent the second step of diphthamide biosynthesis. This Methanospirillum hungatei JF-1 (strain ATCC 27890 / DSM 864 / NBRC 100397 / JF-1) protein is Diphthine synthase.